We begin with the raw amino-acid sequence, 503 residues long: Capsanthin/capsorubin synthase, chromoplastic (503 aa).

88–117 (VIIIGTGPAGLRLAEQVSSRHSVKVCCVDP) is an NAD(+) binding site.

This sequence belongs to the lycopene cyclase family.

It is found in the plastid. The protein resides in the chromoplast. It catalyses the reaction all-trans-violaxanthin = all-trans-capsorubin. It carries out the reaction all-trans-antheraxanthin = all-trans-capsanthin. It participates in carotenoid biosynthesis; capsanthin biosynthesis; capsanthin from antheraxanthin: step 1/1. Its pathway is carotenoid biosynthesis; capsorubin biosynthesis; capsorubin from violaxanthin: step 1/1. In terms of biological role, catalyzes the conversion of the ubiquitous 5,6-epoxycarotenoids, antheraxanthin and violaxanthin, into capsanthin and capsorubin, respectively. This chain is Capsanthin/capsorubin synthase, chromoplastic (CCS), found in Citrus sinensis (Sweet orange).